Reading from the N-terminus, the 577-residue chain is Probable ATP-dependent RNA helicase DDX55 homolog (577 aa).

Positions 7–37 match the Q motif motif; the sequence is AVATKTYREKLGPEILEVFDKSYKSFTDVQV. The region spanning 40–218 is the Helicase ATP-binding domain; the sequence is GTHLLNLSDV…VFGLRNAKQV (179 aa). An ATP-binding site is contributed by 53–60; sequence SPTGSGKT. The DEAD box signature appears at 166 to 169; that stretch reads DEAD. A Helicase C-terminal domain is found at 231–393; the sequence is TLKNYFVECP…EVKVPTSTSR (163 aa). Positions 508-577 are disordered; that stretch reads AKEKKRREKE…LSKKEIKDVL (70 aa). The segment covering 510–530 has biased composition (basic residues); the sequence is EKKRREKEARKMKRAGGRFKS.

Belongs to the DEAD box helicase family. DDX55/SPB4 subfamily.

The catalysed reaction is ATP + H2O = ADP + phosphate + H(+). Probable ATP-binding RNA helicase. The sequence is that of Probable ATP-dependent RNA helicase DDX55 homolog from Caenorhabditis briggsae.